Consider the following 583-residue polypeptide: 2-succinyl-5-enolpyruvyl-6-hydroxy-3-cyclohexene-1-carboxylate synthase (583 aa).

It belongs to the TPP enzyme family. MenD subfamily. In terms of assembly, homodimer. The cofactor is Mg(2+). It depends on Mn(2+) as a cofactor. Thiamine diphosphate is required as a cofactor.

It carries out the reaction isochorismate + 2-oxoglutarate + H(+) = 5-enolpyruvoyl-6-hydroxy-2-succinyl-cyclohex-3-ene-1-carboxylate + CO2. The protein operates within quinol/quinone metabolism; 1,4-dihydroxy-2-naphthoate biosynthesis; 1,4-dihydroxy-2-naphthoate from chorismate: step 2/7. It participates in quinol/quinone metabolism; menaquinone biosynthesis. Functionally, catalyzes the thiamine diphosphate-dependent decarboxylation of 2-oxoglutarate and the subsequent addition of the resulting succinic semialdehyde-thiamine pyrophosphate anion to isochorismate to yield 2-succinyl-5-enolpyruvyl-6-hydroxy-3-cyclohexene-1-carboxylate (SEPHCHC). This is 2-succinyl-5-enolpyruvyl-6-hydroxy-3-cyclohexene-1-carboxylate synthase from Chlorobium phaeovibrioides (strain DSM 265 / 1930) (Prosthecochloris vibrioformis (strain DSM 265)).